The sequence spans 310 residues: Aspartate carbamoyltransferase catalytic subunit (310 aa).

2 residues coordinate carbamoyl phosphate: arginine 55 and threonine 56. Residue lysine 83 coordinates L-aspartate. Carbamoyl phosphate is bound by residues arginine 105, histidine 136, and glutamine 139. L-aspartate contacts are provided by arginine 169 and arginine 223. Residues glycine 264 and proline 265 each contribute to the carbamoyl phosphate site.

It belongs to the aspartate/ornithine carbamoyltransferase superfamily. ATCase family. Heterododecamer (2C3:3R2) of six catalytic PyrB chains organized as two trimers (C3), and six regulatory PyrI chains organized as three dimers (R2).

It catalyses the reaction carbamoyl phosphate + L-aspartate = N-carbamoyl-L-aspartate + phosphate + H(+). It participates in pyrimidine metabolism; UMP biosynthesis via de novo pathway; (S)-dihydroorotate from bicarbonate: step 2/3. Catalyzes the condensation of carbamoyl phosphate and aspartate to form carbamoyl aspartate and inorganic phosphate, the committed step in the de novo pyrimidine nucleotide biosynthesis pathway. This Saccharopolyspora erythraea (strain ATCC 11635 / DSM 40517 / JCM 4748 / NBRC 13426 / NCIMB 8594 / NRRL 2338) protein is Aspartate carbamoyltransferase catalytic subunit.